Here is a 310-residue protein sequence, read N- to C-terminus: HTH-type transcriptional activator TtdR (310 aa).

The region spanning 6 to 63 (PLAKDLQVLVEIVHSGSFSAAAATLGQTPAFVTKRIQILENTLATTLLNRSARGVALT) is the HTH lysR-type domain. The H-T-H motif DNA-binding region spans 23–42 (FSAAAATLGQTPAFVTKRIQ).

Belongs to the LysR transcriptional regulatory family.

Its function is as follows. Positive regulator required for L-tartrate-dependent anaerobic growth on glycerol. Induces expression of the ttdA-ttdB-ygjE operon. The chain is HTH-type transcriptional activator TtdR (ttdR) from Escherichia coli O6:K15:H31 (strain 536 / UPEC).